The primary structure comprises 679 residues: Protein hook (679 aa).

The 118-residue stretch at 6 to 123 (NEMYYSLLEW…RLLQLVLGCA (118 aa)) folds into the Calponin-homology (CH) domain. 2 coiled-coil regions span residues 135–437 (EIMC…LKCG) and 480–574 (QTAL…QEIL).

The protein belongs to the hook family. As to quaternary structure, homodimer. Interacts with microtubules via its N-terminus.

The protein resides in the cytoplasm. It localises to the cytoskeleton. The protein localises to the endosome. It is found in the synapse. In terms of biological role, involved in endocytic trafficking by stabilizing organelles of the endocytic pathway. Probably acts as a cytoskeletal linker protein required to tether endosome vesicles to the cytoskeleton. Involved in modulation of endocytosis at stages required for down-regulation of membrane proteins that control synapse size. Not involved in synaptic vesicle recycling. Required in R7 cells for boss endocytosis into multivesicular bodies (MVBs). Has a role in regulating adult longevity. This Drosophila sechellia (Fruit fly) protein is Protein hook.